A 122-amino-acid polypeptide reads, in one-letter code: Large ribosomal subunit protein uL14c (122 aa).

Belongs to the universal ribosomal protein uL14 family. As to quaternary structure, part of the 50S ribosomal subunit.

The protein localises to the plastid. Its function is as follows. Binds to 23S rRNA. This is Large ribosomal subunit protein uL14c from Cuscuta obtusiflora (Peruvian dodder).